A 179-amino-acid polypeptide reads, in one-letter code: Large ribosomal subunit protein uL16m (179 aa).

This sequence belongs to the universal ribosomal protein uL16 family. As to quaternary structure, component of the mitochondrial ribosome large subunit.

The protein localises to the mitochondrion. The sequence is that of Large ribosomal subunit protein uL16m (RPL16) from Arabidopsis thaliana (Mouse-ear cress).